Here is a 445-residue protein sequence, read N- to C-terminus: Enolase (445 aa).

2 residues coordinate substrate: His-165 and Glu-174. Glu-217 (proton donor) is an active-site residue. The Mg(2+) site is built by Asp-252, Glu-303, and Asp-330. Substrate-binding residues include Glu-303 and Asp-330. Lys-355 acts as the Proton acceptor in catalysis. Residues 382–385 and Lys-406 each bind substrate; that span reads SHRS.

The protein belongs to the enolase family. As to quaternary structure, homodimer. Mg(2+) serves as cofactor.

Its subcellular location is the cytoplasm. The enzyme catalyses (2R)-2-phosphoglycerate = phosphoenolpyruvate + H2O. Its pathway is carbohydrate degradation; glycolysis; pyruvate from D-glyceraldehyde 3-phosphate: step 4/5. The sequence is that of Enolase (ENO) from Eimeria tenella (Coccidian parasite).